Here is a 133-residue protein sequence, read N- to C-terminus: ATP synthase epsilon chain, chloroplastic (133 aa).

It belongs to the ATPase epsilon chain family. As to quaternary structure, F-type ATPases have 2 components, CF(1) - the catalytic core - and CF(0) - the membrane proton channel. CF(1) has five subunits: alpha(3), beta(3), gamma(1), delta(1), epsilon(1). CF(0) has three main subunits: a, b and c.

It is found in the plastid. Its subcellular location is the chloroplast thylakoid membrane. Functionally, produces ATP from ADP in the presence of a proton gradient across the membrane. This is ATP synthase epsilon chain, chloroplastic from Nicotiana tomentosiformis (Tobacco).